The chain runs to 312 residues: Small kinetochore-associated protein (312 aa).

Residues 1 to 13 (MATHKAEAQETDF) show a composition bias toward basic and acidic residues. Disordered stretches follow at residues 1–32 (MATH…PSSR), 55–176 (LKRS…KDKN), and 221–242 (KGLN…DPTD). The segment covering 75-84 (RPTTMASSKT) has biased composition (polar residues). Composition is skewed to basic and acidic residues over residues 131–143 (DVTK…RENG) and 166–176 (QKPEEDLKDKN). The tract at residues 156 to 312 (IRSSYKPLSK…LEEMEQLLEM (157 aa)) is interaction with SPAG5. A coiled-coil region spans residues 169–210 (EEDLKDKNELLEAVNKQLHQKLTETQGELKDLTQKVELLEKF). Residues 246–288 (LLETLKDELKLFNETAKKQMEELQALKVKLKLKEKERIQFLEQ) adopt a coiled-coil conformation.

Part of an astrin (SPAG5)-kinastrin (SKAP) complex containing KNSTRN, SPAG5, PLK1, DYNLL1 and SGO2. Interacts with SPAG5. Directly binds to microtubules, although at relatively low affinity. Interacts with CENPE; this interaction greatly favors microtubule-binding. Interacts with DSN1/MIS13; leading to localization to kinetochores. Interacts with MAPRE1/EB1; leading to localization to the microtubule plus ends. Interacts with PRPF19. Interacts with DYNLL1. Interacts with MAP4.

The protein localises to the nucleus. Its subcellular location is the chromosome. It is found in the centromere. The protein resides in the kinetochore. It localises to the cytoplasm. The protein localises to the cytoskeleton. Its subcellular location is the spindle pole. It is found in the microtubule organizing center. Its function is as follows. Essential component of the mitotic spindle required for faithful chromosome segregation and progression into anaphase. Promotes the metaphase-to-anaphase transition and is required for chromosome alignment, normal timing of sister chromatid segregation, and maintenance of spindle pole architecture. The astrin (SPAG5)-kinastrin (SKAP) complex promotes stable microtubule-kinetochore attachments. Required for kinetochore oscillations and dynamics of microtubule plus-ends during live cell mitosis, possibly by forming a link between spindle microtubule plus-ends and mitotic chromosomes to achieve faithful cell division. The polypeptide is Small kinetochore-associated protein (Knstrn) (Rattus norvegicus (Rat)).